The following is a 448-amino-acid chain: Glucose-6-phosphate isomerase (448 aa).

The Proton donor role is filled by Glu-290. Catalysis depends on residues His-311 and Lys-425.

Belongs to the GPI family.

It localises to the cytoplasm. It catalyses the reaction alpha-D-glucose 6-phosphate = beta-D-fructose 6-phosphate. The protein operates within carbohydrate biosynthesis; gluconeogenesis. It functions in the pathway carbohydrate degradation; glycolysis; D-glyceraldehyde 3-phosphate and glycerone phosphate from D-glucose: step 2/4. Its function is as follows. Catalyzes the reversible isomerization of glucose-6-phosphate to fructose-6-phosphate. This Latilactobacillus sakei subsp. sakei (strain 23K) (Lactobacillus sakei subsp. sakei) protein is Glucose-6-phosphate isomerase.